The chain runs to 790 residues: Serine/threonine-protein kinase DCLK3 (790 aa).

Positions 1–37 (MPAAPVLRPPPPPATPAPPAPSRPAPPIPGHRGPCDH) are disordered. Residues 7–29 (LRPPPPPATPAPPAPSRPAPPIP) are compositionally biased toward pro residues. The Doublecortin domain occupies 97 to 183 (RVVTVVKLGG…KEPLTLKSIQ (87 aa)). The segment covering 201-218 (HSRVPSPRLRSRLPSKLL) has biased composition (low complexity). Disordered stretches follow at residues 201–290 (HSRV…SGEK) and 315–506 (LQLG…KGII). 4 stretches are compositionally biased toward basic and acidic residues: residues 332-345 (DLGR…EKLV), 352-400 (RPSE…ESQD), 425-434 (IDMRREDRHT), and 457-496 (TRGE…ERPS). Residues 514 to 771 (YDIGGVIGDG…AEQVLQHPWI (258 aa)) enclose the Protein kinase domain. Residues 520 to 528 (IGDGNFATV) and lysine 543 each bind ATP. Catalysis depends on aspartate 635, which acts as the Proton acceptor.

Belongs to the protein kinase superfamily. CAMK Ser/Thr protein kinase family. CaMK subfamily. Highly expressed in brain and to a lower extent in liver and kidney.

It localises to the cytoplasm. The protein localises to the nucleus. The catalysed reaction is L-seryl-[protein] + ATP = O-phospho-L-seryl-[protein] + ADP + H(+). It carries out the reaction L-threonyl-[protein] + ATP = O-phospho-L-threonyl-[protein] + ADP + H(+). The polypeptide is Serine/threonine-protein kinase DCLK3 (Dclk3) (Mus musculus (Mouse)).